We begin with the raw amino-acid sequence, 198 residues long: MORN repeat-containing protein 4 homolog (198 aa).

N-acetylalanine is present on Ala2. Low complexity predominate over residues 23 to 45 (QHQQHPHQQGQHGHHQQGQGQSQ). Residues 23–46 (QHQQHPHQQGQHGHHQQGQGQSQY) form a disordered region. MORN repeat units lie at residues 64–87 (YIGE…DGTR), 88–109 (YDGQ…ADGA), 111–132 (YEGE…ADGM), and 134–153 (YEGE…TFQD).

Interacts with ninaC. Phosphorylated under dark conditions and is dephosphorylated by light exposure. In terms of tissue distribution, retina. Expressed primarily in the phototransducing compartment of photoreceptor cells, the rhabdomeres and its expression is dependent on ninaC protein (at protein level).

Its subcellular location is the membrane. The protein resides in the cell projection. The protein localises to the rhabdomere membrane. Plays a role in promoting axonal degeneration following neuronal injury by toxic insult or trauma. Organizes rhabdomeric components to suppress random activation of the phototransduction cascade and thus increases the signaling fidelity of dark-adapted photoreceptors. The rtp/ninaC complex is required for stability of inad and inac and the normal termination of phototransduction in the retina. The polypeptide is MORN repeat-containing protein 4 homolog (Drosophila melanogaster (Fruit fly)).